The sequence spans 920 residues: Isoleucine--tRNA ligase (920 aa).

The 'HIGH' region motif lies at P57 to H67. Position 560 (E560) interacts with L-isoleucyl-5'-AMP. Positions K601–S605 match the 'KMSKS' region motif. K604 lines the ATP pocket. Positions 890, 893, 910, and 913 each coordinate Zn(2+).

The protein belongs to the class-I aminoacyl-tRNA synthetase family. IleS type 1 subfamily. In terms of assembly, monomer. It depends on Zn(2+) as a cofactor.

It localises to the cytoplasm. It catalyses the reaction tRNA(Ile) + L-isoleucine + ATP = L-isoleucyl-tRNA(Ile) + AMP + diphosphate. Functionally, catalyzes the attachment of isoleucine to tRNA(Ile). As IleRS can inadvertently accommodate and process structurally similar amino acids such as valine, to avoid such errors it has two additional distinct tRNA(Ile)-dependent editing activities. One activity is designated as 'pretransfer' editing and involves the hydrolysis of activated Val-AMP. The other activity is designated 'posttransfer' editing and involves deacylation of mischarged Val-tRNA(Ile). This Caldicellulosiruptor bescii (strain ATCC BAA-1888 / DSM 6725 / KCTC 15123 / Z-1320) (Anaerocellum thermophilum) protein is Isoleucine--tRNA ligase.